A 511-amino-acid polypeptide reads, in one-letter code: Histidine ammonia-lyase (511 aa).

A cross-link (5-imidazolinone (Ala-Gly)) is located at residues alanine 142–glycine 144. Serine 143 is subject to 2,3-didehydroalanine (Ser).

Belongs to the PAL/histidase family. Contains an active site 4-methylidene-imidazol-5-one (MIO), which is formed autocatalytically by cyclization and dehydration of residues Ala-Ser-Gly.

The protein localises to the cytoplasm. The enzyme catalyses L-histidine = trans-urocanate + NH4(+). It functions in the pathway amino-acid degradation; L-histidine degradation into L-glutamate; N-formimidoyl-L-glutamate from L-histidine: step 1/3. This chain is Histidine ammonia-lyase, found in Caulobacter sp. (strain K31).